Here is a 439-residue protein sequence, read N- to C-terminus: Ribosomal protein uS12 methylthiotransferase RimO (439 aa).

Positions 5 to 115 constitute an MTTase N-terminal domain; sequence PRISFTSLGC…VLDAVHRALP (111 aa). The [4Fe-4S] cluster site is built by Cys14, Cys50, Cys79, Cys146, Cys150, and Cys153. In terms of domain architecture, Radical SAM core spans 132-369; that stretch reads LTPRHYAYLK…MARQQKISAR (238 aa). The region spanning 372 to 438 is the TRAM domain; that stretch reads KRKVGTRQQI…QYDLHGSVAG (67 aa).

The protein belongs to the methylthiotransferase family. RimO subfamily. It depends on [4Fe-4S] cluster as a cofactor.

Its subcellular location is the cytoplasm. It catalyses the reaction L-aspartate(89)-[ribosomal protein uS12]-hydrogen + (sulfur carrier)-SH + AH2 + 2 S-adenosyl-L-methionine = 3-methylsulfanyl-L-aspartate(89)-[ribosomal protein uS12]-hydrogen + (sulfur carrier)-H + 5'-deoxyadenosine + L-methionine + A + S-adenosyl-L-homocysteine + 2 H(+). Functionally, catalyzes the methylthiolation of an aspartic acid residue of ribosomal protein uS12. The sequence is that of Ribosomal protein uS12 methylthiotransferase RimO from Bradyrhizobium diazoefficiens (strain JCM 10833 / BCRC 13528 / IAM 13628 / NBRC 14792 / USDA 110).